The following is a 280-amino-acid chain: DegV domain-containing protein TTE1491 (280 aa).

The DegV domain occupies 4–279 (IAIVTDSLSD…PDAAGVFFEE (276 aa)). 2 residues coordinate hexadecanoate: threonine 61 and serine 93.

May bind long-chain fatty acids, such as palmitate, and may play a role in lipid transport or fatty acid metabolism. The chain is DegV domain-containing protein TTE1491 from Caldanaerobacter subterraneus subsp. tengcongensis (strain DSM 15242 / JCM 11007 / NBRC 100824 / MB4) (Thermoanaerobacter tengcongensis).